A 600-amino-acid chain; its full sequence is UvrABC system protein C (600 aa).

The GIY-YIG domain occupies 15-100; the sequence is NSAGVYQYFN…IKQLHPKYNI (86 aa). Residues 203–238 form the UVR domain; it reads SVLLKNLEKQMLVLAQNENYEEAAKVRDQIAMIKDL.

Belongs to the UvrC family. As to quaternary structure, interacts with UvrB in an incision complex.

It is found in the cytoplasm. In terms of biological role, the UvrABC repair system catalyzes the recognition and processing of DNA lesions. UvrC both incises the 5' and 3' sides of the lesion. The N-terminal half is responsible for the 3' incision and the C-terminal half is responsible for the 5' incision. The chain is UvrABC system protein C from Campylobacter jejuni (strain RM1221).